Reading from the N-terminus, the 572-residue chain is Hemagglutinin-neuraminidase (572 aa).

Residues 1–31 (MEYWKHTNHGKDAGNELETSMATHGNKLTNK) lie on the Intravirion side of the membrane. The chain crosses the membrane as a helical span at residues 32 to 52 (IIYILWTIILVLLSIVFIIVL). The Virion surface segment spans residues 53-572 (INSIKSEKAH…FKTEIPKSCS (520 aa)). Intrachain disulfides connect Cys190-Cys214 and Cys256-Cys269. Positions 252-257 (NRKSCS) are involved in neuraminidase activity. Residues Asn308 and Asn351 are each glycosylated (N-linked (GlcNAc...) asparagine; by host). 2 disulfide bridges follow: Cys355–Cys469 and Cys463–Cys473. A glycan (N-linked (GlcNAc...) asparagine; by host) is linked at Asn523. A disulfide bridge links Cys535 with Cys544.

This sequence belongs to the paramyxoviruses hemagglutinin-neuraminidase family. In terms of assembly, homotetramer; composed of disulfide-linked homodimers. Interacts with F protein trimer.

It localises to the virion membrane. The protein localises to the host cell membrane. The catalysed reaction is Hydrolysis of alpha-(2-&gt;3)-, alpha-(2-&gt;6)-, alpha-(2-&gt;8)- glycosidic linkages of terminal sialic acid residues in oligosaccharides, glycoproteins, glycolipids, colominic acid and synthetic substrates.. Attaches the virus to sialic acid-containing cell receptors and thereby initiating infection. Binding of HN protein to the receptor induces a conformational change that allows the F protein to trigger virion/cell membranes fusion. Functionally, neuraminidase activity ensures the efficient spread of the virus by dissociating the mature virions from the neuraminic acid containing glycoproteins. This is Hemagglutinin-neuraminidase (HN) from Homo sapiens (Human).